A 626-amino-acid chain; its full sequence is 5'-AMP-activated protein kinase catalytic subunit alpha-2 (626 aa).

Residues 1–24 (MFSHQDRDRDRKEDGGGDGTEMKS) show a composition bias toward basic and acidic residues. Residues 1–77 (MFSHQDRDRD…GETSTKQQQE (77 aa)) form a disordered region. Basic residues predominate over residues 38–49 (NLSRKLSAKSRK). The segment covering 58 to 77 (DNSSKMSSPGGETSTKQQQE) has biased composition (polar residues). Residues 87 to 339 (YILKETLGVG…IKDVIAHEWF (253 aa)) enclose the Protein kinase domain. ATP is bound by residues 93-101 (LGVGTFGKV) and Lys-116. The active-site Proton acceptor is the Asp-210. A Phosphothreonine; by par-4 modification is found at Thr-243. A disordered region spans residues 541–568 (SGSASASSSRHASMSMPQKPAGIRGTRT). Residues 542-555 (GSASASSSRHASMS) show a composition bias toward low complexity.

This sequence belongs to the protein kinase superfamily. CAMK Ser/Thr protein kinase family. SNF1 subfamily. In terms of assembly, tetramer, composed of 2 regulatory (R) and 2 catalytic (C) subunits. In the presence of cAMP it dissociates into 2 active monomeric C subunits and an R dimer that binds four cAMP molecules. Phosphorylated on Thr-243 in response to oxidative stress and during dauer development. Phosphorylation at Thr-243 is increased in response to sodium azide or the AMP analog AICAR (5-amino-1-(5-phospho-beta-D-ribosyl)imidazole-4-carboxamide). Expressed in the pharynx, the ventral cord, neurons including the hermaphrodite-specific neuron, body wall muscles, the vulva, the excretory canal, and weakly in the intestine.

The catalysed reaction is L-seryl-[protein] + ATP = O-phospho-L-seryl-[protein] + ADP + H(+). It carries out the reaction L-threonyl-[protein] + ATP = O-phospho-L-threonyl-[protein] + ADP + H(+). With respect to regulation, activated by phosphorylation. In terms of biological role, acts as a sensor that couples lifespan to information about energy levels and insulin-like signals. Role in motility and response to oxidative stress. Involved in the establishment of germline stem cell (GSC) quiescence during dauer development. Plays a role in axon regrowth after axotomy in PLM neurons. Plays a role in the maintenance of glycogen stores which are necessary for resistance to hyperosmotic stress. Plays a role in the regulation of flp-7 secretion from ASI neurons. Keeps the CREB-regulated transcription coactivator 1 homolog crtc-1 inactive which in turn inhibits flp-7 secretion. Following serotonin signaling, derepresses crtc-1 which stimulates flp-7 secretion and subsequent body fat loss. In Caenorhabditis elegans, this protein is 5'-AMP-activated protein kinase catalytic subunit alpha-2.